The sequence spans 631 residues: Probable protein phosphatase 2C 31 (631 aa).

Disordered stretches follow at residues 119–142 (GPLH…SDRF) and 205–231 (LSGR…PKGN). Positions 131–140 (ASGSASTASD) are enriched in polar residues. The PPM-type phosphatase domain maps to 221–622 (DGDYRSTPKG…DDVSIIVMSF (402 aa)). The Mn(2+) site is built by aspartate 261 and glycine 262. The tract at residues 324-347 (GGDDDPDAERKAKRGRIERNADDD) is disordered. Residues aspartate 550 and aspartate 613 each contribute to the Mn(2+) site.

It belongs to the PP2C family. Mg(2+) serves as cofactor. It depends on Mn(2+) as a cofactor.

It catalyses the reaction O-phospho-L-seryl-[protein] + H2O = L-seryl-[protein] + phosphate. The enzyme catalyses O-phospho-L-threonyl-[protein] + H2O = L-threonyl-[protein] + phosphate. The protein is Probable protein phosphatase 2C 31 of Oryza sativa subsp. japonica (Rice).